The following is an 879-amino-acid chain: Alanine--tRNA ligase (879 aa).

Zn(2+) contacts are provided by H566, H570, C668, and H672.

The protein belongs to the class-II aminoacyl-tRNA synthetase family. Zn(2+) is required as a cofactor.

The protein localises to the cytoplasm. The enzyme catalyses tRNA(Ala) + L-alanine + ATP = L-alanyl-tRNA(Ala) + AMP + diphosphate. In terms of biological role, catalyzes the attachment of alanine to tRNA(Ala) in a two-step reaction: alanine is first activated by ATP to form Ala-AMP and then transferred to the acceptor end of tRNA(Ala). Also edits incorrectly charged Ser-tRNA(Ala) and Gly-tRNA(Ala) via its editing domain. In Listeria welshimeri serovar 6b (strain ATCC 35897 / DSM 20650 / CCUG 15529 / CIP 8149 / NCTC 11857 / SLCC 5334 / V8), this protein is Alanine--tRNA ligase.